Here is a 260-residue protein sequence, read N- to C-terminus: Ribosomal RNA small subunit methyltransferase G (260 aa).

The interval 1 to 45 (MKQRGPAGGRSSSPKPSAPGSGAGEGPDGRSAPASQKINKASAND) is disordered. Positions 9-20 (GRSSSPKPSAPG) are enriched in low complexity. Positions 33–45 (PASQKINKASAND) are enriched in polar residues. S-adenosyl-L-methionine is bound by residues glycine 123, phenylalanine 128, and arginine 193.

Belongs to the methyltransferase superfamily. RNA methyltransferase RsmG family.

It is found in the cytoplasm. The catalysed reaction is guanosine(527) in 16S rRNA + S-adenosyl-L-methionine = N(7)-methylguanosine(527) in 16S rRNA + S-adenosyl-L-homocysteine. In terms of biological role, specifically methylates the N7 position of guanine in position 527 of 16S rRNA. The polypeptide is Ribosomal RNA small subunit methyltransferase G (Bradyrhizobium diazoefficiens (strain JCM 10833 / BCRC 13528 / IAM 13628 / NBRC 14792 / USDA 110)).